Consider the following 259-residue polypeptide: Sphinganine C4-monooxygenase 2 (259 aa).

3 consecutive transmembrane segments (helical) span residues 10-30 (FLGT…YICL), 54-74 (AVVK…VILF), and 91-111 (ILLL…WQYF). One can recognise a Fatty acid hydroxylase domain in the interval 98-234 (FIIAMLVIDT…FVMWDRILGT (137 aa)). The short motif at 113–117 (HRYMH) is the Histidine box-1 element. The Histidine box-2 signature appears at 127–131 (HSQHH). The Histidine box-3 signature appears at 206–212 (YHDVHHQ).

It belongs to the sterol desaturase family. Fe cation is required as a cofactor. In terms of tissue distribution, ubiquitous, with higher levels in flowers and roots.

The protein resides in the endoplasmic reticulum membrane. The catalysed reaction is a dihydroceramide + 2 Fe(II)-[cytochrome b5] + O2 + 2 H(+) = a phytoceramide + 2 Fe(III)-[cytochrome b5] + H2O. It participates in membrane lipid metabolism; sphingolipid biosynthesis. Its function is as follows. Involved in sphingolipid trihydroxy long-chain base (4-hydroxysphinganine) biosynthesis. Can use C18- and C20-sphinganine as substrates to produce C18- and C20-phytosphinganines (D-ribo-2-amino-1,3,4-trihydroxyoctadecane and -eicosane). The polypeptide is Sphinganine C4-monooxygenase 2 (SBH2) (Arabidopsis thaliana (Mouse-ear cress)).